A 214-amino-acid chain; its full sequence is Large ribosomal subunit protein uL3 (214 aa).

Polar residues predominate over residues 132–145; the sequence is SNRASHGNSVTTRA. Residues 132-155 form a disordered region; sequence SNRASHGNSVTTRAPGSIGQAQDP. N5-methylglutamine is present on glutamine 153.

It belongs to the universal ribosomal protein uL3 family. In terms of assembly, part of the 50S ribosomal subunit. Forms a cluster with proteins L14 and L19. In terms of processing, methylated by PrmB.

Its function is as follows. One of the primary rRNA binding proteins, it binds directly near the 3'-end of the 23S rRNA, where it nucleates assembly of the 50S subunit. This is Large ribosomal subunit protein uL3 from Laribacter hongkongensis (strain HLHK9).